The primary structure comprises 88 residues: Homeobox protein knotted-1-like 3 (88 aa).

The region spanning 4–24 is the ELK domain; sequence ELKKQLLRKYSGCLGNLRKEL. Residues 25–88 constitute a DNA-binding region (homeobox; TALE-type); it reads CKKRKKDKLP…NQRKRHWKPS (64 aa).

This sequence belongs to the TALE/KNOX homeobox family. In terms of tissue distribution, strongly expressed in ear inflorescence primordia and shoot meristem. Weakly expressed in embryos. Absent from leaves.

The protein resides in the nucleus. Its function is as follows. Probably binds to the DNA sequence 5'-TGAC-3'. In Zea mays (Maize), this protein is Homeobox protein knotted-1-like 3 (KNOX3).